A 111-amino-acid polypeptide reads, in one-letter code: Small ribosomal subunit protein bS6 (111 aa).

It belongs to the bacterial ribosomal protein bS6 family.

In terms of biological role, binds together with bS18 to 16S ribosomal RNA. This is Small ribosomal subunit protein bS6 from Francisella tularensis subsp. tularensis (strain FSC 198).